The primary structure comprises 248 residues: 2,3-bisphosphoglycerate-dependent phosphoglycerate mutase 2 (248 aa).

Residues 8–15 (RHGESAWN), 21–22 (TG), Arg60, 87–90 (EKHY), Lys98, 114–115 (RR), and 183–184 (GN) contribute to the substrate site. His9 acts as the Tele-phosphohistidine intermediate in catalysis. The Proton donor/acceptor role is filled by Glu87.

Belongs to the phosphoglycerate mutase family. BPG-dependent PGAM subfamily.

The enzyme catalyses (2R)-2-phosphoglycerate = (2R)-3-phosphoglycerate. Its pathway is carbohydrate degradation; glycolysis; pyruvate from D-glyceraldehyde 3-phosphate: step 3/5. In terms of biological role, catalyzes the interconversion of 2-phosphoglycerate and 3-phosphoglycerate. The polypeptide is 2,3-bisphosphoglycerate-dependent phosphoglycerate mutase 2 (Bacteroides thetaiotaomicron (strain ATCC 29148 / DSM 2079 / JCM 5827 / CCUG 10774 / NCTC 10582 / VPI-5482 / E50)).